The following is a 388-amino-acid chain: Chorismate synthase (388 aa).

2 residues coordinate NADP(+): Arg39 and Arg45. FMN contacts are provided by residues 130 to 132 (RSS), 251 to 252 (NA), Gly296, 311 to 315 (KPIPT), and Arg337.

The protein belongs to the chorismate synthase family. As to quaternary structure, homotetramer. The cofactor is FMNH2.

It catalyses the reaction 5-O-(1-carboxyvinyl)-3-phosphoshikimate = chorismate + phosphate. It functions in the pathway metabolic intermediate biosynthesis; chorismate biosynthesis; chorismate from D-erythrose 4-phosphate and phosphoenolpyruvate: step 7/7. Functionally, catalyzes the anti-1,4-elimination of the C-3 phosphate and the C-6 proR hydrogen from 5-enolpyruvylshikimate-3-phosphate (EPSP) to yield chorismate, which is the branch point compound that serves as the starting substrate for the three terminal pathways of aromatic amino acid biosynthesis. This reaction introduces a second double bond into the aromatic ring system. This chain is Chorismate synthase, found in Streptococcus pyogenes serotype M3 (strain SSI-1).